Here is a 104-residue protein sequence, read N- to C-terminus: Pterin-4-alpha-carbinolamine dehydratase (104 aa).

N-acetylalanine is present on Ala-2. Residues 61-63 (DHH) and 78-81 (STHE) each bind substrate.

This sequence belongs to the pterin-4-alpha-carbinolamine dehydratase family. In terms of assembly, homotetramer and homodimer. Heterotetramer with HNF1A; formed by a dimer of dimers. Interacts with HNF1B (via HNF-p1 domain); the interaction increases HNF1B transactivation activity.

The protein localises to the cytoplasm. It localises to the nucleus. It carries out the reaction (4aS,6R)-4a-hydroxy-L-erythro-5,6,7,8-tetrahydrobiopterin = (6R)-L-erythro-6,7-dihydrobiopterin + H2O. Functionally, involved in tetrahydrobiopterin biosynthesis. Seems to both prevent the formation of 7-pterins and accelerate the formation of quinonoid-BH2. Coactivator for HNF1A-dependent transcription. Regulates the dimerization of homeodomain protein HNF1A and enhances its transcriptional activity. Also acts as a coactivator for HNF1B-dependent transcription. The polypeptide is Pterin-4-alpha-carbinolamine dehydratase (Pcbd1) (Rattus norvegicus (Rat)).